Consider the following 517-residue polypeptide: Cytochrome P450 monooxygenase ausI (517 aa).

A helical transmembrane segment spans residues 8 to 28 (LAPLGQPWIAGLVVVSAVLYL). Cysteine 457 is a binding site for heme.

Belongs to the cytochrome P450 family. Heme is required as a cofactor.

Its subcellular location is the membrane. The protein operates within secondary metabolite biosynthesis; terpenoid biosynthesis. Functionally, cytochrome P450 monooxygenase; part of the gene cluster that mediates the biosynthesis of calidodehydroaustin, a fungal meroterpenoid. The first step of the pathway is the synthesis of 3,5-dimethylorsellinic acid by the polyketide synthase ausA. 3,5-dimethylorsellinic acid is then prenylated by the polyprenyl transferase ausN. Further epoxidation by the FAD-dependent monooxygenase ausM and cyclization by the probable terpene cyclase ausL lead to the formation of protoaustinoid A. Protoaustinoid A is then oxidized to spiro-lactone preaustinoid A3 by the combined action of the FAD-binding monooxygenases ausB and ausC, and the dioxygenase ausE. Acid-catalyzed keto-rearrangement and ring contraction of the tetraketide portion of preaustinoid A3 by ausJ lead to the formation of preaustinoid A4. The aldo-keto reductase ausK, with the help of ausH, is involved in the next step by transforming preaustinoid A4 into isoaustinone which is in turn hydroxylated by the P450 monooxygenase ausI to form austinolide. The cytochrome P450 monooxygenase ausG modifies austinolide to austinol. Austinol is further acetylated to austin by the O-acetyltransferase ausP, which spontaneously changes to dehydroaustin. The cytochrome P450 monooxygenase ausR then converts dehydroaustin is into 7-dehydrodehydroaustin. The hydroxylation catalyzed by ausR permits the O-acetyltransferase ausQ to add an additional acetyl group to the molecule, leading to the formation of acetoxydehydroaustin. The short chain dehydrogenase ausT catalyzes the reduction of the double bond present between carbon atoms 1 and 2 to convert 7-dehydrodehydroaustin into 1,2-dihydro-7-hydroxydehydroaustin. AusQ catalyzes not only an acetylation reaction but also the addition of the PKS ausV diketide product to 1,2-dihydro-7-hydroxydehydroaustin, forming precalidodehydroaustin. Finally, the iron/alpha-ketoglutarate-dependent dioxygenase converts precalidodehydroaustin into calidodehydroaustin. The chain is Cytochrome P450 monooxygenase ausI from Aspergillus calidoustus.